The sequence spans 549 residues: Glucose-6-phosphate isomerase (549 aa).

Catalysis depends on Glu-355, which acts as the Proton donor. Active-site residues include His-386 and Lys-514.

Belongs to the GPI family.

It is found in the cytoplasm. It carries out the reaction alpha-D-glucose 6-phosphate = beta-D-fructose 6-phosphate. Its pathway is carbohydrate biosynthesis; gluconeogenesis. The protein operates within carbohydrate degradation; glycolysis; D-glyceraldehyde 3-phosphate and glycerone phosphate from D-glucose: step 2/4. In terms of biological role, catalyzes the reversible isomerization of glucose-6-phosphate to fructose-6-phosphate. This Klebsiella pneumoniae (strain 342) protein is Glucose-6-phosphate isomerase.